Reading from the N-terminus, the 291-residue chain is ATP synthase gamma chain (291 aa).

It belongs to the ATPase gamma chain family. F-type ATPases have 2 components, CF(1) - the catalytic core - and CF(0) - the membrane proton channel. CF(1) has five subunits: alpha(3), beta(3), gamma(1), delta(1), epsilon(1). CF(0) has three main subunits: a, b and c.

It localises to the cell inner membrane. In terms of biological role, produces ATP from ADP in the presence of a proton gradient across the membrane. The gamma chain is believed to be important in regulating ATPase activity and the flow of protons through the CF(0) complex. This Neisseria meningitidis serogroup C / serotype 2a (strain ATCC 700532 / DSM 15464 / FAM18) protein is ATP synthase gamma chain.